The sequence spans 339 residues: Glycerol-3-phosphate dehydrogenase [NAD(P)+] (339 aa).

Positions 15, 16, 36, and 110 each coordinate NADPH. Sn-glycerol 3-phosphate is bound by residues Lys110, Gly139, and Thr141. Ala143 lines the NADPH pocket. Residues Lys195, Asp248, Ser258, Arg259, and Asn260 each contribute to the sn-glycerol 3-phosphate site. The active-site Proton acceptor is the Lys195. Arg259 lines the NADPH pocket. Val283 and Glu285 together coordinate NADPH.

It belongs to the NAD-dependent glycerol-3-phosphate dehydrogenase family.

The protein resides in the cytoplasm. It carries out the reaction sn-glycerol 3-phosphate + NAD(+) = dihydroxyacetone phosphate + NADH + H(+). The catalysed reaction is sn-glycerol 3-phosphate + NADP(+) = dihydroxyacetone phosphate + NADPH + H(+). The protein operates within membrane lipid metabolism; glycerophospholipid metabolism. Catalyzes the reduction of the glycolytic intermediate dihydroxyacetone phosphate (DHAP) to sn-glycerol 3-phosphate (G3P), the key precursor for phospholipid synthesis. The sequence is that of Glycerol-3-phosphate dehydrogenase [NAD(P)+] from Shigella boydii serotype 18 (strain CDC 3083-94 / BS512).